We begin with the raw amino-acid sequence, 207 residues long: Large ribosomal subunit protein eL13 (207 aa).

It belongs to the eukaryotic ribosomal protein eL13 family. As to quaternary structure, component of the 60S large ribosomal subunit (LSU).

Its subcellular location is the cytoplasm. Its function is as follows. Component of the ribosome, a large ribonucleoprotein complex responsible for the synthesis of proteins in the cell. The small ribosomal subunit (SSU) binds messenger RNAs (mRNAs) and translates the encoded message by selecting cognate aminoacyl-transfer RNA (tRNA) molecules. The large subunit (LSU) contains the ribosomal catalytic site termed the peptidyl transferase center (PTC), which catalyzes the formation of peptide bonds, thereby polymerizing the amino acids delivered by tRNAs into a polypeptide chain. The nascent polypeptides leave the ribosome through a tunnel in the LSU and interact with protein factors that function in enzymatic processing, targeting, and the membrane insertion of nascent chains at the exit of the ribosomal tunnel. As part of the LSU, it is probably required for its formation and the maturation of rRNAs. The protein is Large ribosomal subunit protein eL13 (rpl-13) of Caenorhabditis elegans.